A 482-amino-acid chain; its full sequence is Falcipain-2b (482 aa).

The Cytoplasmic segment spans residues 1–35 (MDYHMDYIPNEVISHQGERFVDKYVDRKILKNKKS). Positions 1–241 (MDYHMDYIPN…PLKNSKYLLD (241 aa)) are cleaved as a propeptide — activation peptide. The short motif at 16–25 (QGERFVDKYV) is the Bipartite vacuolar targeting signal 1 element. A helical; Signal-anchor for type II membrane protein transmembrane segment spans residues 36–56 (LLVIISLSVLSVVGFILFYFT). Residues 57–482 (PNFRKSDLFK…GTDAFIPLIE (426 aa)) lie on the Lumenal side of the membrane. The N-linked (GlcNAc...) asparagine glycan is linked to Asn-67. The short motif at 84 to 105 (KSPNGKKFIVSKIDEALSFYDN) is the Bipartite vacuolar targeting signal 2 element. An N-linked (GlcNAc...) asparagine glycan is attached at Asn-117. A Nose motif; required for the correct folding of the mature form motif is present at residues 242–258 (QINYDAVIKKYKGNENF). 4 cysteine pairs are disulfide-bonded: Cys-280-Cys-321, Cys-314-Cys-355, Cys-340-Cys-360, and Cys-409-Cys-470. The active site involves Cys-283. His-415 is a catalytic residue. The Arm motif; binds to host hemoglobin and required for the inhibitory interaction between the propeptide and the catalytic domain motif lies at 426 to 435 (EIVNPLTKKG).

The protein belongs to the peptidase C1 family. As to quaternary structure, component of the hemozoin formation complex (HFC) composed of falcipains FP2A and/or FP2B, plasmepsins PMII, PMIII/HAP and PMIV, heme detoxifying protein HDP and falcilysin FLN. The HFC complex is involved in hemoglobin degradation and detoxification of heme in the food vacuole during the asexual blood stage.

It localises to the vacuole. Its subcellular location is the membrane. Its function is as follows. Cysteine protease which cleaves native host hemoglobin in the food vacuole during the asexual blood stage. Preferentially cleaves substrates which have a leucine at the P2 position. In Plasmodium falciparum (isolate 3D7), this protein is Falcipain-2b.